A 140-amino-acid chain; its full sequence is Translation initiation factor 2 subunit beta (140 aa).

Belongs to the eIF-2-beta/eIF-5 family. As to quaternary structure, heterotrimer composed of an alpha, a beta and a gamma chain.

Functionally, eIF-2 functions in the early steps of protein synthesis by forming a ternary complex with GTP and initiator tRNA. This Pyrococcus furiosus (strain ATCC 43587 / DSM 3638 / JCM 8422 / Vc1) protein is Translation initiation factor 2 subunit beta.